The sequence spans 699 residues: Elongation factor G (699 aa).

Residues 8–283 enclose the tr-type G domain; it reads EHIRNIGICA…AVVDFLPSPI (276 aa). GTP is bound by residues 17-24, 81-85, and 135-138; these read AHIDAGKT, DTPGH, and NKMD.

Belongs to the TRAFAC class translation factor GTPase superfamily. Classic translation factor GTPase family. EF-G/EF-2 subfamily.

Its subcellular location is the cytoplasm. Catalyzes the GTP-dependent ribosomal translocation step during translation elongation. During this step, the ribosome changes from the pre-translocational (PRE) to the post-translocational (POST) state as the newly formed A-site-bound peptidyl-tRNA and P-site-bound deacylated tRNA move to the P and E sites, respectively. Catalyzes the coordinated movement of the two tRNA molecules, the mRNA and conformational changes in the ribosome. The polypeptide is Elongation factor G (Rickettsia rickettsii).